A 259-amino-acid polypeptide reads, in one-letter code: Glutamate racemase (259 aa).

Residues 9–10 (DS) and 41–42 (YG) each bind substrate. Cysteine 73 functions as the Proton donor/acceptor in the catalytic mechanism. 74–75 (NT) is a binding site for substrate. Cysteine 183 functions as the Proton donor/acceptor in the catalytic mechanism. 184-185 (TH) contributes to the substrate binding site.

It belongs to the aspartate/glutamate racemases family.

It carries out the reaction L-glutamate = D-glutamate. It participates in cell wall biogenesis; peptidoglycan biosynthesis. In terms of biological role, provides the (R)-glutamate required for cell wall biosynthesis. The protein is Glutamate racemase of Shewanella frigidimarina (strain NCIMB 400).